The sequence spans 160 residues: Major strawberry allergen Fra a 1.05 (160 aa).

This sequence belongs to the BetVI family. Post-translationally, phosphorylated in vivo. Phosphorylation prevents its activity as ribonuclease.

In terms of biological role, possesses ribonuclease activity in vitro. The polypeptide is Major strawberry allergen Fra a 1.05 (Fragaria ananassa (Strawberry)).